Consider the following 210-residue polypeptide: Large ribosomal subunit protein bL25 (210 aa).

Residues 186-210 form a disordered region; that stretch reads ISSASTEKEAESNQESTSTTPSSES. Positions 198 to 210 are enriched in low complexity; the sequence is NQESTSTTPSSES.

This sequence belongs to the bacterial ribosomal protein bL25 family. CTC subfamily. Part of the 50S ribosomal subunit; part of the 5S rRNA/L5/L18/L25 subcomplex. Contacts the 5S rRNA. Binds to the 5S rRNA independently of L5 and L18.

Functionally, this is one of the proteins that binds to the 5S RNA in the ribosome where it forms part of the central protuberance. This chain is Large ribosomal subunit protein bL25, found in Ehrlichia chaffeensis (strain ATCC CRL-10679 / Arkansas).